The following is a 579-amino-acid chain: Acetolactate synthase (579 aa).

Glu-61 is a binding site for thiamine diphosphate. Residues Arg-163, 274–295 (HGTA…VGVR), and 317–336 (DIDP…IVGD) contribute to the FAD site. The tract at residues 408–487 (QHQMWAGQFV…VKVIILNNGW (80 aa)) is thiamine pyrophosphate binding. Residues Asp-458 and Asn-485 each coordinate Mg(2+).

The protein belongs to the TPP enzyme family. Mg(2+) serves as cofactor. The cofactor is thiamine diphosphate.

The catalysed reaction is 2 pyruvate + H(+) = (2S)-2-acetolactate + CO2. It participates in amino-acid biosynthesis; L-isoleucine biosynthesis; L-isoleucine from 2-oxobutanoate: step 1/4. Its pathway is amino-acid biosynthesis; L-valine biosynthesis; L-valine from pyruvate: step 1/4. The sequence is that of Acetolactate synthase (ilvY) from Arthrospira platensis (Spirulina platensis).